The primary structure comprises 210 residues: Secreted isochorismatase effector Isc1 (210 aa).

Active-site residues include D25, K90, and C124.

The protein belongs to the isochorismatase family.

The protein resides in the secreted. It localises to the host cytoplasm. Its subcellular location is the host nucleus. The enzyme catalyses isochorismate + H2O = (2S,3S)-2,3-dihydroxy-2,3-dihydrobenzoate + pyruvate. Functionally, secreted isochorismatase required for full virulence of P.sojae. Suppresses salicylate-mediated innate immunity of the host by disrupting the plant salicylate metabolism pathway via hydrolysis of its isochorismate precursor. The chain is Secreted isochorismatase effector Isc1 from Phytophthora sojae (strain P6497) (Soybean stem and root rot agent).